The following is a 1001-amino-acid chain: Sarcoplasmic/endoplasmic reticulum calcium ATPase 1 (1001 aa).

The Cytoplasmic segment spans residues 1–48; that stretch reads MEAAHSKSTEECLAYFGVSETTGLTPDQVKRHLEKYGHNELPAEEGKS. Residues 49–69 traverse the membrane as a helical segment; it reads LWELVIEQFEDLLVRILLLAA. The Lumenal portion of the chain corresponds to 70-89; the sequence is CISFVLAWFEEGEETITAFV. The chain crosses the membrane as a helical span at residues 90-110; it reads EPFVILLILIANAIVGVWQER. Residues 111-253 are Cytoplasmic-facing; it reads NAENAIEALK…QDKTPLQQKL (143 aa). Residues 254 to 273 form a helical membrane-spanning segment; sequence DEFGEQLSKVISLICVAVWL. Topologically, residues 274–295 are lumenal; that stretch reads INIGHFNDPVHGGSWIRGAIYY. The helical transmembrane segment at 296-313 threads the bilayer; sequence FKIAVALAVAAIPEGLPA. The Ca(2+) site is built by Val-304, Ala-305, Ile-307, and Glu-309. The Cytoplasmic segment spans residues 314 to 757; it reads VITTCLALGT…EEGRAIYNNM (444 aa). Asp-351 functions as the 4-aspartylphosphate intermediate in the catalytic mechanism. 2 residues coordinate Mg(2+): Asp-351 and Thr-353. Thr-353 lines the ATP pocket. Position 441 is a phosphothreonine (Thr-441). 4 residues coordinate ATP: Glu-442, Arg-489, Lys-515, and Arg-560. Thr-569 carries the post-translational modification Phosphothreonine. At Ser-581 the chain carries Phosphoserine. Positions 625, 626, 627, 678, and 684 each coordinate ATP. Asp-703 serves as a coordination point for Mg(2+). Asn-706 is a binding site for ATP. A helical transmembrane segment spans residues 758–777; the sequence is KQFIRYLISSNVGEVVCIFL. Ca(2+)-binding residues include Asn-768 and Glu-771. At 778–787 the chain is on the lumenal side; that stretch reads TAALGLPEAL. The helical transmembrane segment at 788 to 808 threads the bilayer; it reads IPVQLLWVNLVTDGLPATALG. The segment at 788 to 808 is interaction with PLN; the sequence is IPVQLLWVNLVTDGLPATALG. The Ca(2+) site is built by Asn-796, Thr-799, and Asp-800. At 809 to 828 the chain is on the cytoplasmic side; the sequence is FNPPDLDIMDRPPRSPKEPL. The helical transmembrane segment at 829 to 851 threads the bilayer; that stretch reads ISGWLFFRYMAIGGYVGAATVGA. The Lumenal segment spans residues 852-897; that stretch reads AAWWFMYAEDGPGVTYHQLTHFMQCTEDHPHFEGLDCEIFEAPEPM. An intrachain disulfide couples Cys-876 to Cys-888. A helical transmembrane segment spans residues 898-917; sequence TMALSVLVTIEMCNALNSLS. Residue Glu-908 participates in Ca(2+) binding. Topologically, residues 918–930 are cytoplasmic; that stretch reads ENQSLMRMPPWVN. The helical transmembrane segment at 931 to 949 threads the bilayer; that stretch reads IWLLGSICLSMSLHFLILY. The segment at 932–943 is interaction with PLN; that stretch reads WLLGSICLSMSL. Residues 950–964 are Lumenal-facing; it reads VDPLPMIFKLKALDL. The helical transmembrane segment at 965–985 threads the bilayer; sequence TQWLMVLKISLPVIGLDEILK. Topologically, residues 986 to 1001 are cytoplasmic; sequence FIARNYLEDPEDERRK.

It belongs to the cation transport ATPase (P-type) (TC 3.A.3) family. Type IIA subfamily. As to quaternary structure, interacts with sarcolipin (SLN). Interacts with phospholamban (PLN). Interacts with myoregulin (MRLN). Interacts with DWORF. Interacts with VMP1. Requires Mg(2+) as cofactor. In terms of tissue distribution, skeletal muscle (at protein level). Skeletal muscle, fast twitch muscle (type II) fibers.

It localises to the endoplasmic reticulum membrane. The protein resides in the sarcoplasmic reticulum membrane. It carries out the reaction Ca(2+)(in) + ATP + H2O = Ca(2+)(out) + ADP + phosphate + H(+). With respect to regulation, inhibited by sarcolipin (SLN) and myoregulin (MRLN). Has also been shown to be reversibly inhibited by phospholamban (PLN) at low calcium concentrations in vitro. Dephosphorylated PLN decreases the apparent affinity of the ATPase for calcium and this inhibition is regulated by the phosphorylation of PLN in vitro. Enhanced by DWORF; DWORF increases activity by displacing sarcolipin (SLN), phospholamban (PLN) and myoregulin (MRLN). In terms of biological role, key regulator of striated muscle performance by acting as the major Ca(2+) ATPase responsible for the reuptake of cytosolic Ca(2+) into the sarcoplasmic reticulum. Catalyzes the hydrolysis of ATP coupled with the translocation of calcium from the cytosol to the sarcoplasmic reticulum lumen. Contributes to calcium sequestration involved in muscular excitation/contraction. The sequence is that of Sarcoplasmic/endoplasmic reticulum calcium ATPase 1 (ATP2A1) from Oryctolagus cuniculus (Rabbit).